A 236-amino-acid polypeptide reads, in one-letter code: Baculoviral IAP repeat-containing protein 8 (236 aa).

A BIR repeat occupies 7–70 (RLITFGTWMY…KWYPGCKYLL (64 aa)). Positions 39, 42, 59, and 66 each coordinate Zn(2+). The RING-type zinc finger occupies 189–224 (CKICMDRHIAVVFIPCGHLVTCKQCAEAVDRCPMCS).

It belongs to the IAP family. In terms of assembly, binds to caspase-9. Testis specific in normal tissues.

The protein resides in the cytoplasm. Protects against apoptosis mediated by BAX. In Homo sapiens (Human), this protein is Baculoviral IAP repeat-containing protein 8 (BIRC8).